We begin with the raw amino-acid sequence, 62 residues long: Toxin Tb2-II (62 aa).

The 62-residue stretch at 1-62 folds into the LCN-type CS-alpha/beta domain; that stretch reads KEGYAMDHEG…KVWDYATNKC (62 aa). 4 cysteine pairs are disulfide-bonded: C11-C62, C15-C38, C23-C43, and C27-C45.

The protein belongs to the long (4 C-C) scorpion toxin superfamily. Sodium channel inhibitor family. Beta subfamily. In terms of tissue distribution, expressed by the venom gland.

Its subcellular location is the secreted. In terms of biological role, beta toxins bind voltage-independently at site-4 of sodium channels (Nav) and shift the voltage of activation toward more negative potentials thereby affecting sodium channel activation and promoting spontaneous and repetitive firing. This toxin is active against both mammals and insects. The sequence is that of Toxin Tb2-II from Tityus bahiensis (Brazilian scorpion).